Here is a 468-residue protein sequence, read N- to C-terminus: 3-isopropylmalate dehydratase large subunit (468 aa).

3 residues coordinate [4Fe-4S] cluster: cysteine 347, cysteine 407, and cysteine 410.

It belongs to the aconitase/IPM isomerase family. LeuC type 1 subfamily. As to quaternary structure, heterodimer of LeuC and LeuD. [4Fe-4S] cluster serves as cofactor.

The catalysed reaction is (2R,3S)-3-isopropylmalate = (2S)-2-isopropylmalate. It participates in amino-acid biosynthesis; L-leucine biosynthesis; L-leucine from 3-methyl-2-oxobutanoate: step 2/4. In terms of biological role, catalyzes the isomerization between 2-isopropylmalate and 3-isopropylmalate, via the formation of 2-isopropylmaleate. This chain is 3-isopropylmalate dehydratase large subunit, found in Campylobacter jejuni (strain RM1221).